Reading from the N-terminus, the 544-residue chain is D-2-hydroxyglutarate dehydrogenase, mitochondrial (544 aa).

The transit peptide at 1 to 10 directs the protein to the mitochondrion; it reads MMMPRLVPRW. The region spanning 119-298 is the FAD-binding PCMH-type domain; sequence VRGSSKVLLR…TAVSILCPPK (180 aa). At lysine 124 the chain carries N6-succinyllysine. (R)-2-hydroxyglutarate is bound by residues arginine 409, threonine 413, and lysine 424. Residue arginine 409 participates in (R)-lactate binding. The (R)-malate site is built by arginine 409, threonine 413, and lysine 424. Zn(2+)-binding residues include histidine 457 and histidine 464. Position 466 (asparagine 466) interacts with (R)-2-hydroxyglutarate. Glutamate 498 is a Zn(2+) binding site. Histidine 499 is a (R)-2-hydroxyglutarate binding site. Histidine 499 is a (R)-lactate binding site. A (R)-malate-binding site is contributed by histidine 499.

Belongs to the FAD-binding oxidoreductase/transferase type 4 family. It depends on FAD as a cofactor.

It localises to the mitochondrion. The catalysed reaction is (R)-2-hydroxyglutarate + A = 2-oxoglutarate + AH2. It catalyses the reaction (R)-malate + A = oxaloacetate + AH2. Activated by zinc and cobalt ions. Functionally, catalyzes the oxidation of D-2-hydroxyglutarate (D-2-HG) to alpha-ketoglutarate. Also catalyzes the oxidation of other D-2-hydroxyacids, such as D-malate (D-MAL) and D-lactate (D-LAC). Exhibits high activities towards D-2-HG and D-MAL but a very weak activity towards D-LAC. In Bos taurus (Bovine), this protein is D-2-hydroxyglutarate dehydrogenase, mitochondrial (D2HGDH).